A 330-amino-acid chain; its full sequence is Phosphate acyltransferase (330 aa).

The protein belongs to the PlsX family. Homodimer. Probably interacts with PlsY.

The protein resides in the cytoplasm. The enzyme catalyses a fatty acyl-[ACP] + phosphate = an acyl phosphate + holo-[ACP]. It participates in lipid metabolism; phospholipid metabolism. Catalyzes the reversible formation of acyl-phosphate (acyl-PO(4)) from acyl-[acyl-carrier-protein] (acyl-ACP). This enzyme utilizes acyl-ACP as fatty acyl donor, but not acyl-CoA. The sequence is that of Phosphate acyltransferase from Bacillus cereus (strain G9842).